Consider the following 231-residue polypeptide: Uracil phosphoribosyltransferase (231 aa).

Position 38 to 42 (38 to 42) interacts with GTP; the sequence is KGLVR. Residues Arg87, Arg112, and 140–148 contribute to the 5-phospho-alpha-D-ribose 1-diphosphate site; that span reads DPMIATGST. Residues Ile203 and 208-210 contribute to the uracil site; that span reads GDA. Asp209 contributes to the 5-phospho-alpha-D-ribose 1-diphosphate binding site.

The protein belongs to the UPRTase family. Mg(2+) serves as cofactor.

The catalysed reaction is UMP + diphosphate = 5-phospho-alpha-D-ribose 1-diphosphate + uracil. It participates in pyrimidine metabolism; UMP biosynthesis via salvage pathway; UMP from uracil: step 1/1. Allosterically activated by GTP. In terms of biological role, catalyzes the conversion of uracil and 5-phospho-alpha-D-ribose 1-diphosphate (PRPP) to UMP and diphosphate. The protein is Uracil phosphoribosyltransferase of Methanococcus maripaludis (strain C7 / ATCC BAA-1331).